The primary structure comprises 265 residues: Energy-coupling factor transporter transmembrane protein EcfT (265 aa).

Helical transmembrane passes span 32–52 (MVLL…VFII), 72–92 (LVII…GRVI), 115–135 (LIML…IALT), 150–170 (VPAH…PTLM), and 245–265 (LAAF…RFIW).

Belongs to the energy-coupling factor EcfT family. In terms of assembly, forms a stable energy-coupling factor (ECF) transporter complex composed of 2 membrane-embedded substrate-binding proteins (S component), 2 ATP-binding proteins (A component) and 2 transmembrane proteins (T component). May be able to interact with more than 1 S component at a time.

Its subcellular location is the cell membrane. In terms of biological role, transmembrane (T) component of an energy-coupling factor (ECF) ABC-transporter complex. Unlike classic ABC transporters this ECF transporter provides the energy necessary to transport a number of different substrates. The polypeptide is Energy-coupling factor transporter transmembrane protein EcfT (Thermosediminibacter oceani (strain ATCC BAA-1034 / DSM 16646 / JW/IW-1228P)).